A 298-amino-acid polypeptide reads, in one-letter code: Homoserine kinase (298 aa).

83–93 is an ATP binding site; it reads PISRGLGSSSS.

This sequence belongs to the GHMP kinase family. Homoserine kinase subfamily.

It is found in the cytoplasm. It catalyses the reaction L-homoserine + ATP = O-phospho-L-homoserine + ADP + H(+). Its pathway is amino-acid biosynthesis; L-threonine biosynthesis; L-threonine from L-aspartate: step 4/5. Its function is as follows. Catalyzes the ATP-dependent phosphorylation of L-homoserine to L-homoserine phosphate. This is Homoserine kinase from Clostridium botulinum (strain Eklund 17B / Type B).